A 310-amino-acid polypeptide reads, in one-letter code: Methionyl-tRNA formyltransferase (310 aa).

110-113 (SLLP) is a binding site for (6S)-5,6,7,8-tetrahydrofolate.

The protein belongs to the Fmt family.

The catalysed reaction is L-methionyl-tRNA(fMet) + (6R)-10-formyltetrahydrofolate = N-formyl-L-methionyl-tRNA(fMet) + (6S)-5,6,7,8-tetrahydrofolate + H(+). Attaches a formyl group to the free amino group of methionyl-tRNA(fMet). The formyl group appears to play a dual role in the initiator identity of N-formylmethionyl-tRNA by promoting its recognition by IF2 and preventing the misappropriation of this tRNA by the elongation apparatus. This is Methionyl-tRNA formyltransferase from Streptomyces griseus subsp. griseus (strain JCM 4626 / CBS 651.72 / NBRC 13350 / KCC S-0626 / ISP 5235).